The sequence spans 271 residues: tRNA (guanine-N(1)-)-methyltransferase (271 aa).

Residues Gly120 and 145–150 (IGDYVL) contribute to the S-adenosyl-L-methionine site.

It belongs to the RNA methyltransferase TrmD family. In terms of assembly, homodimer.

The protein localises to the cytoplasm. The enzyme catalyses guanosine(37) in tRNA + S-adenosyl-L-methionine = N(1)-methylguanosine(37) in tRNA + S-adenosyl-L-homocysteine + H(+). In terms of biological role, specifically methylates guanosine-37 in various tRNAs. The polypeptide is tRNA (guanine-N(1)-)-methyltransferase (Bifidobacterium longum subsp. infantis (strain ATCC 15697 / DSM 20088 / JCM 1222 / NCTC 11817 / S12)).